A 350-amino-acid chain; its full sequence is Hydroxymethylglutaryl-CoA synthase (350 aa).

Catalysis depends on Glu83, which acts as the Proton donor/acceptor. Cys115 functions as the Acyl-thioester intermediate in the catalytic mechanism. Residues Cys115 and Thr156 each contribute to the (3S)-3-hydroxy-3-methylglutaryl-CoA site. Residue Arg204 participates in CoA binding. (3S)-3-hydroxy-3-methylglutaryl-CoA is bound by residues Thr206 and His239. The Proton donor/acceptor role is filled by His239. Lys244 provides a ligand contact to CoA. Positions 271 and 301 each coordinate (3S)-3-hydroxy-3-methylglutaryl-CoA.

This sequence belongs to the thiolase-like superfamily. Archaeal HMG-CoA synthase family. Interacts with acetoacetyl-CoA thiolase that catalyzes the precedent step in the pathway and with a DUF35 protein. The acetoacetyl-CoA thiolase/HMG-CoA synthase complex channels the intermediate via a fused CoA-binding site, which allows for efficient coupling of the endergonic thiolase reaction with the exergonic HMGCS reaction.

It catalyses the reaction acetoacetyl-CoA + acetyl-CoA + H2O = (3S)-3-hydroxy-3-methylglutaryl-CoA + CoA + H(+). The protein operates within metabolic intermediate biosynthesis; (R)-mevalonate biosynthesis; (R)-mevalonate from acetyl-CoA: step 2/3. Functionally, catalyzes the condensation of acetyl-CoA with acetoacetyl-CoA to form 3-hydroxy-3-methylglutaryl-CoA (HMG-CoA). Functions in the mevalonate (MVA) pathway leading to isopentenyl diphosphate (IPP), a key precursor for the biosynthesis of isoprenoid compounds that are building blocks of archaeal membrane lipids. This chain is Hydroxymethylglutaryl-CoA synthase, found in Pyrococcus furiosus (strain ATCC 43587 / DSM 3638 / JCM 8422 / Vc1).